Reading from the N-terminus, the 123-residue chain is Large ribosomal subunit protein bL12 (123 aa).

It belongs to the bacterial ribosomal protein bL12 family. In terms of assembly, homodimer. Part of the ribosomal stalk of the 50S ribosomal subunit. Forms a multimeric L10(L12)X complex, where L10 forms an elongated spine to which 2 to 4 L12 dimers bind in a sequential fashion. Binds GTP-bound translation factors.

Forms part of the ribosomal stalk which helps the ribosome interact with GTP-bound translation factors. Is thus essential for accurate translation. The chain is Large ribosomal subunit protein bL12 from Dechloromonas aromatica (strain RCB).